Reading from the N-terminus, the 259-residue chain is uncharacterized protein (259 aa).

Residues 110–259 form the N-acetyltransferase domain; sequence QMGHPLTAWG…VHTVFHYFLT (150 aa).

In terms of biological role, may be involved in maturation of the outermost layer of the spore. This is an uncharacterized protein from Bacillus subtilis (strain 168).